The following is an 83-amino-acid chain: MSSGGLLLLLGLLTLWAELTPVSSRKRHQFCNVPPEPGRCNANVRAFYYNPRLRKCIEFSYGGCGGNANNFKSRGECKRTCAE.

An N-terminal signal peptide occupies residues methionine 1 to serine 24. The 51-residue stretch at cysteine 31–cysteine 81 folds into the BPTI/Kunitz inhibitor domain. 3 cysteine pairs are disulfide-bonded: cysteine 31–cysteine 81, cysteine 40–cysteine 64, and cysteine 56–cysteine 77.

This sequence belongs to the venom Kunitz-type family. In terms of tissue distribution, expressed by the venom gland.

It localises to the secreted. Binds and inhibits MMP-2 and shows an activity in inhibiting migration and invasion of neuroblastoma. Intact C-terminus is crucial to the activities of this protein. This Bungarus multicinctus (Many-banded krait) protein is Kunitz-type serine protease inhibitor PILP-3.